The primary structure comprises 133 residues: Salivary cystatin-L (133 aa).

An N-terminal signal peptide occupies residues 1–19 (MTASFALVLLLGGVAVCIA). One can recognise a Cystatin domain in the interval 29–115 (KANHQANPEY…VAQRTCTTVV (87 aa)).

This sequence belongs to the cystatin family. As to expression, salivary gland.

The protein resides in the secreted. Inhibitor of cysteine proteinases. Inhibits host cathepsin L (CTSL) and S (CTSS). Modulates production of various cytokines and chemokines in lipopolysaccharide (LPS)-stimulated mouse dendritic cell. Suppresses maturation of mouse bone-marrow-derived dendritic cells (BMDCs). The polypeptide is Salivary cystatin-L (Ixodes persulcatus (Taiga tick)).